The following is a 180-amino-acid chain: Type-1 fimbrial protein, C chain (180 aa).

Positions Met1–Ser23 are cleaved as a signal peptide. An intrachain disulfide couples Cys44 to Cys84.

It belongs to the fimbrial protein family.

It is found in the fimbrium. Its function is as follows. Fimbriae (also called pili), polar filaments radiating from the surface of the bacterium to a length of 0.5-1.5 micrometers and numbering 100-300 per cell, enable bacteria to colonize the epithelium of specific host organs. The chain is Type-1 fimbrial protein, C chain (pilC) from Escherichia coli O6:H1 (strain CFT073 / ATCC 700928 / UPEC).